Here is a 317-residue protein sequence, read N- to C-terminus: Porphobilinogen deaminase (317 aa).

Cys-240 carries the S-(dipyrrolylmethanemethyl)cysteine modification.

The protein belongs to the HMBS family. In terms of assembly, monomer. Dipyrromethane is required as a cofactor.

It carries out the reaction 4 porphobilinogen + H2O = hydroxymethylbilane + 4 NH4(+). The protein operates within porphyrin-containing compound metabolism; protoporphyrin-IX biosynthesis; coproporphyrinogen-III from 5-aminolevulinate: step 2/4. Tetrapolymerization of the monopyrrole PBG into the hydroxymethylbilane pre-uroporphyrinogen in several discrete steps. The chain is Porphobilinogen deaminase from Nitratidesulfovibrio vulgaris (strain DSM 19637 / Miyazaki F) (Desulfovibrio vulgaris).